We begin with the raw amino-acid sequence, 418 residues long: Lysophosphatidic acid phosphatase type 6 (418 aa).

Residues methionine 1–alanine 25 constitute a mitochondrion transit peptide. The substrate binding stretch occupies residues arginine 51–arginine 161. The active-site Nucleophile is the histidine 52. Aspartate 327 serves as the catalytic Proton donor.

The protein belongs to the histidine acid phosphatase family. As to quaternary structure, monomer.

The protein localises to the mitochondrion. It carries out the reaction a phosphate monoester + H2O = an alcohol + phosphate. It catalyses the reaction 1-(9Z-octadecenoyl)-sn-glycero-3-phosphate + H2O = 1-(9Z-octadecenoyl)-sn-glycerol + phosphate. In terms of biological role, hydrolyzes lysophosphatidic acid (LPA) containing a medium length fatty acid chain to the corresponding monoacylglycerol. Has highest activity with lysophosphatidic acid containing myristate (C14:0), monounsaturated oleate (C18:1) or palmitate (C16:0), and lower activity with C18:0 and C6:0 lysophosphatidic acid. In Mus musculus (Mouse), this protein is Lysophosphatidic acid phosphatase type 6 (Acp6).